Here is a 503-residue protein sequence, read N- to C-terminus: TGF-beta receptor type-1 (503 aa).

The signal sequence occupies residues 1-33 (MEAAVAAPRPRLLLLVLAAAAAAAAALLPGATA). Over 34–126 (LQCFCHLCTK…SSPGLGPVEL (93 aa)) the chain is Extracellular. 5 disulfides stabilise this stretch: Cys-36-Cys-54, Cys-38-Cys-41, Cys-48-Cys-71, Cys-86-Cys-100, and Cys-101-Cys-106. Asn-45 carries an N-linked (GlcNAc...) asparagine glycan. Residues 127–147 (AAVIAGPVCFVCISLMLMVYI) traverse the membrane as a helical segment. The Cytoplasmic segment spans residues 148–503 (CHNRTVIHHR…QLSQQEGIKM (356 aa)). Ser-165 bears the Phosphoserine mark. Positions 175 to 204 (TTLKDLIYDMTTSGSGSGLPLLVQRTIART) constitute a GS domain. Phosphothreonine; by TGFBR2 occurs at positions 185 and 186. Ser-187, Ser-189, and Ser-191 each carry phosphoserine; by TGFBR2. The FKBP1A-binding signature appears at 193–194 (LP). Residues 205–495 (IVLQESIGKG…LRIKKTLSQL (291 aa)) enclose the Protein kinase domain. Residues 211-219 (IGKGRFGEV) and Lys-232 contribute to the ATP site. Lys-268 participates in a covalent cross-link: Glycyl lysine isopeptide (Lys-Gly) (interchain with G-Cter in ubiquitin). Asp-333 (proton acceptor) is an active-site residue. Lys-391 participates in a covalent cross-link: Glycyl lysine isopeptide (Lys-Gly) (interchain with G-Cter in SUMO).

It belongs to the protein kinase superfamily. TKL Ser/Thr protein kinase family. TGFB receptor subfamily. As to quaternary structure, homodimer; in the endoplasmic reticulum but also at the cell membrane. Heterohexamer; TGFB1, TGFB2 and TGFB3 homodimeric ligands assemble a functional receptor composed of two TGFBR1 and TGFBR2 heterodimers to form a ligand-receptor heterohexamer. The respective affinity of TGBRB1 and TGFBR2 for the ligands may modulate the kinetics of assembly of the receptor and may explain the different biological activities of TGFB1, TGFB2 and TGFB3. Component of a complex composed of TSC22D1 (via N-terminus), TGFBR1 and TGFBR2; the interaction between TSC22D1 and TGFBR1 is inhibited by SMAD7 and promoted by TGFB1. Interacts with CD109; inhibits TGF-beta receptor activation in keratinocytes. Interacts with RBPMS. Interacts (unphosphorylated) with FKBP1A; prevents TGFBR1 phosphorylation by TGFBR2 and stabilizes it in the inactive conformation. Interacts with SMAD2, SMAD3 and ZFYVE9; ZFYVE9 recruits SMAD2 and SMAD3 to the TGF-beta receptor. Interacts with TRAF6 and MAP3K7; induces MAP3K7 activation by TRAF6. Interacts with PARD6A; involved in TGF-beta induced epithelial to mesenchymal transition. Interacts with NEDD4L. Interacts with SMAD7, SMURF1 and SMURF2; SMAD7 recruits NEDD4L, SMURF1 and SMURF2 to the TGF-beta receptor. Interacts with USP15 and VPS39. Interacts with SDCBP (via C-terminus). Interacts with CAV1 and this interaction is impaired in the presence of SDCBP. Interacts with APPL1; interaction is TGF beta dependent; mediates trafficking of the TGFBR1 from the endosomes to the nucleus via microtubules in a TRAF6-dependent manner. Interacts with GPR50; this interaction promotes the constitutive activation of SMAD signaling pathway. Requires Mg(2+) as cofactor. Mn(2+) serves as cofactor. Phosphorylated at basal levels in the absence of ligand. Activated upon phosphorylation by TGFBR2, mainly in the GS domain. Phosphorylation in the GS domain abrogates FKBP1A-binding. In terms of processing, N-Glycosylated. Post-translationally, ubiquitinated; undergoes ubiquitination catalyzed by several E3 ubiquitin ligases including SMURF1, SMURF2 and NEDD4L2. Results in the proteasomal and/or lysosomal degradation of the receptor thereby negatively regulating its activity. Deubiquitinated by USP15, leading to stabilization of the protein and enhanced TGF-beta signal. Its ubiquitination and proteasome-mediated degradation is negatively regulated by SDCBP. Ubiquitinated by BFAR via'Lys-63'-linked ubiquitination at Lys-268, leading to TGF-beta signaling activation. In terms of tissue distribution, found in all tissues examined, most abundant in placenta and least abundant in brain and heart. Expressed in a variety of cancer cell lines.

It localises to the cell membrane. It is found in the cell junction. The protein localises to the tight junction. Its subcellular location is the cell surface. The protein resides in the membrane raft. It carries out the reaction L-threonyl-[receptor-protein] + ATP = O-phospho-L-threonyl-[receptor-protein] + ADP + H(+). The enzyme catalyses L-seryl-[receptor-protein] + ATP = O-phospho-L-seryl-[receptor-protein] + ADP + H(+). Kept in an inactive conformation by FKBP1A preventing receptor activation in absence of ligand. CD109 is another inhibitor of the receptor. Functionally, transmembrane serine/threonine kinase forming with the TGF-beta type II serine/threonine kinase receptor, TGFBR2, the non-promiscuous receptor for the TGF-beta cytokines TGFB1, TGFB2 and TGFB3. Transduces the TGFB1, TGFB2 and TGFB3 signal from the cell surface to the cytoplasm and is thus regulating a plethora of physiological and pathological processes including cell cycle arrest in epithelial and hematopoietic cells, control of mesenchymal cell proliferation and differentiation, wound healing, extracellular matrix production, immunosuppression and carcinogenesis. The formation of the receptor complex composed of 2 TGFBR1 and 2 TGFBR2 molecules symmetrically bound to the cytokine dimer results in the phosphorylation and the activation of TGFBR1 by the constitutively active TGFBR2. Activated TGFBR1 phosphorylates SMAD2 which dissociates from the receptor and interacts with SMAD4. The SMAD2-SMAD4 complex is subsequently translocated to the nucleus where it modulates the transcription of the TGF-beta-regulated genes. This constitutes the canonical SMAD-dependent TGF-beta signaling cascade. Also involved in non-canonical, SMAD-independent TGF-beta signaling pathways. For instance, TGFBR1 induces TRAF6 autoubiquitination which in turn results in MAP3K7 ubiquitination and activation to trigger apoptosis. Also regulates epithelial to mesenchymal transition through a SMAD-independent signaling pathway through PARD6A phosphorylation and activation. The protein is TGF-beta receptor type-1 (TGFBR1) of Homo sapiens (Human).